We begin with the raw amino-acid sequence, 379 residues long: Heterogeneous nuclear ribonucleoprotein A3 (379 aa).

Methionine 1 carries the post-translational modification N-acetylmethionine. The span at 1-10 (MEVKPPPGRP) shows a compositional bias: pro residues. The disordered stretch occupies residues 1-34 (MEVKPPPGRPQPDSGRRRRRRGEEGHDPKEPEQL). Lysine 4 is covalently cross-linked (Glycyl lysine isopeptide (Lys-Gly) (interchain with G-Cter in SUMO2)). Position 14 is a phosphoserine (serine 14). Over residues 21-34 (RGEEGHDPKEPEQL) the composition is skewed to basic and acidic residues. The 84-residue stretch at 35-118 (RKLFIGGLSF…RAVSREDSVK (84 aa)) folds into the RRM 1 domain. Residue lysine 36 forms a Glycyl lysine isopeptide (Lys-Gly) (interchain with G-Cter in SUMO2) linkage. At serine 43 the chain carries Phosphoserine. Arginine 52 is modified (dimethylated arginine; alternate). Arginine 52 bears the Omega-N-methylarginine; alternate mark. Arginine 76 carries the post-translational modification Omega-N-methylarginine. Phosphoserine is present on residues serine 112 and serine 116. A Glycyl lysine isopeptide (Lys-Gly) (interchain with G-Cter in SUMO2) cross-link involves residue lysine 118. Threonine 124 is modified (phosphothreonine). The region spanning 126 to 205 (KKIFVGGIKE…CEVKKALSKQ (80 aa)) is the RRM 2 domain. An N6-acetyllysine; alternate modification is found at lysine 134. Lysine 134 participates in a covalent cross-link: Glycyl lysine isopeptide (Lys-Gly) (interchain with G-Cter in SUMO2); alternate. Glycyl lysine isopeptide (Lys-Gly) (interchain with G-Cter in SUMO2) cross-links involve residues lysine 151 and lysine 182. The disordered stretch occupies residues 204-225 (KQEMQSAGSQRGRGGGSGNFMG). Arginine 214, arginine 216, arginine 226, arginine 239, and arginine 246 each carry omega-N-methylarginine; alternate. Residues arginine 214, arginine 216, arginine 226, arginine 239, and arginine 246 each carry the asymmetric dimethylarginine; alternate modification. Residues 214-225 (RGRGGGSGNFMG) show a composition bias toward gly residues. Arginine 257 carries the omega-N-methylarginine modification. Asymmetric dimethylarginine is present on arginine 286. The tract at residues 335 to 379 (NYSGQQQSNYGPMKGGSFGGRSSGSPYGGGYGSGGGSGGYGSRRF) is disordered. A compositionally biased stretch (gly residues) spans 347-379 (MKGGSFGGRSSGSPYGGGYGSGGGSGGYGSRRF). Phosphoserine is present on serine 351. Arginine 355 carries the post-translational modification Omega-N-methylarginine. Position 359 is a phosphoserine (serine 359). Phosphotyrosine occurs at positions 361 and 365. A phosphoserine mark is found at serine 367 and serine 371. Tyrosine 374 is subject to Phosphotyrosine. A Phosphoserine modification is found at serine 376.

Identified in the spliceosome C complex.

The protein resides in the nucleus. In terms of biological role, plays a role in cytoplasmic trafficking of RNA. Binds to the cis-acting response element, A2RE. May be involved in pre-mRNA splicing. This Mus musculus (Mouse) protein is Heterogeneous nuclear ribonucleoprotein A3 (Hnrnpa3).